The following is a 2248-amino-acid chain: Putative Polycomb group protein ASXL3 (2248 aa).

One can recognise an HTH HARE-type domain in the interval arginine 10–glutamate 84. Positions alanine 156–arginine 232 are disordered. The segment covering lysine 203–histidine 216 has biased composition (basic and acidic residues). Positions lysine 219 to glutamine 228 are enriched in polar residues. One can recognise a DEUBAD domain in the interval proline 254 to glycine 363. Disordered stretches follow at residues glutamate 368–proline 414, threonine 547–phenylalanine 583, cysteine 607–alanine 643, glutamate 703–serine 726, glutamate 762–proline 853, leucine 869–arginine 1052, threonine 1123–methionine 1152, glutamine 1183–serine 1203, lysine 1431–proline 1462, threonine 1573–threonine 1596, and leucine 1990–serine 2068. Polar residues-rich tracts occupy residues lysine 371–threonine 389, serine 395–serine 407, alanine 564–glutamate 580, cysteine 607–serine 617, and serine 624–alanine 643. The span at asparagine 796–isoleucine 818 shows a compositional bias: polar residues. The segment covering serine 937–proline 949 has biased composition (low complexity). 3 stretches are compositionally biased toward basic and acidic residues: residues aspartate 950–glutamate 968, cysteine 975–serine 987, and proline 997–arginine 1008. Over residues arginine 1036 to glycine 1046 the composition is skewed to polar residues. Over residues histidine 2016–proline 2046 the composition is skewed to pro residues. Residues glutamate 2210–valine 2247 form a PHD-type; atypical zinc finger.

It belongs to the Asx family. In terms of assembly, core component of the polycomb repressive deubiquitinase (PR-DUB) complex, at least composed of BAP1, one of ASXL1, ASXL2 or (probably) ASXL3, and one of MBD5 or MBD6. Distinct combinations of ASXL and MBD proteins may preferentially bind specific histone modification marks. The PR-DUB core associates with a number of accessory proteins, including FOXK1, FOXK2, KDM1B, HCFC1 and OGT; KDM1B specifically associates with ASXL2 PR-DUB complexes. Interacts (via PHD domain) with MBD5 and MBD6 (via MBD domain); the interaction is probably direct and mediates association of MBD proteins with the PR-DUB core. Expressed in pancreatic islets, testis, neuroblastoma, head and neck tumor.

The protein localises to the nucleus. In terms of biological role, putative Polycomb group (PcG) protein. PcG proteins act by forming multiprotein complexes, which are required to maintain the transcriptionally repressive state of homeotic genes throughout development. PcG proteins are not required to initiate repression, but to maintain it during later stages of development. They probably act via methylation of histones, rendering chromatin heritably changed in its expressibility. Non-catalytic component of the PR-DUB complex, a complex that specifically mediates deubiquitination of histone H2A monoubiquitinated at 'Lys-119' (H2AK119ub1). The PR-DUB complex is an epigenetic regulator of gene expression and acts as a transcriptional coactivator, affecting genes involved in development, cell communication, signaling, cell proliferation and cell viability. ASXL1, ASXL2 and ASXL3 function redundantly in the PR-DUB complex and are essential for chromatin recruitment and transcriptional activation of associated genes. This chain is Putative Polycomb group protein ASXL3 (ASXL3), found in Homo sapiens (Human).